We begin with the raw amino-acid sequence, 842 residues long: Envelope glycoprotein H (842 aa).

Positions 1 to 20 (MRRPLCAALLAAAVLALAAG) are cleaved as a signal peptide. Residues 21-802 (APAAARGGAG…AGHEAPTFSP (782 aa)) are Virion surface-facing. 2 N-linked (GlcNAc...) asparagine; by host glycosylation sites follow: Asn-77 and Asn-112. The segment at 240 to 303 (ERAAARLAVG…AAGPQRRAYV (64 aa)) is interaction with gL. N-linked (GlcNAc...) asparagine; by host glycosylation is found at Asn-617, Asn-666, Asn-760, and Asn-783. Residues 803–823 (AYVWASVGGALVAGTTIYAIA) traverse the membrane as a helical segment. Over 824-842 (KMLCSSVPLARGYSSVPVF) the chain is Intravirion.

It belongs to the herpesviridae glycoprotein H family. Interacts with glycoprotein L (gL); this interaction is necessary for the correct processing and cell surface expression of gH. The heterodimer gH/gL seems to interact with gB trimers during fusion. Post-translationally, N-glycosylated, O-glycosylated, and sialylated.

The protein resides in the virion membrane. It localises to the host cell membrane. The protein localises to the host endosome membrane. Functionally, the heterodimer glycoprotein H-glycoprotein L is required for the fusion of viral and plasma membranes leading to virus entry into the host cell. Following initial binding to host receptor, membrane fusion is mediated by the fusion machinery composed of gB and the heterodimer gH/gL. May also be involved in the fusion between the virion envelope and the outer nuclear membrane during virion morphogenesis. In Bos taurus (Bovine), this protein is Envelope glycoprotein H.